Here is a 366-residue protein sequence, read N- to C-terminus: Ribosomal RNA large subunit methyltransferase M (366 aa).

Residues serine 188, 221 to 224, aspartate 240, aspartate 260, and aspartate 277 each bind S-adenosyl-L-methionine; that span reads CPGG. Lysine 306 acts as the Proton acceptor in catalysis.

This sequence belongs to the class I-like SAM-binding methyltransferase superfamily. RNA methyltransferase RlmE family. RlmM subfamily. As to quaternary structure, monomer.

Its subcellular location is the cytoplasm. It catalyses the reaction cytidine(2498) in 23S rRNA + S-adenosyl-L-methionine = 2'-O-methylcytidine(2498) in 23S rRNA + S-adenosyl-L-homocysteine + H(+). In terms of biological role, catalyzes the 2'-O-methylation at nucleotide C2498 in 23S rRNA. The chain is Ribosomal RNA large subunit methyltransferase M from Salmonella heidelberg (strain SL476).